The chain runs to 350 residues: MAMRQTPLTCSGHTRPVVDLAFSGITPYGYFLISACKDGKPMLRQGDTGDWIGTFLGHKGAVWGATLNKDATKAATAAADFTAKVWDAVSGDELMTLAHKHIVKTVDFTQDSNYLLTGGQDKLLRIYDLNKPEAEPKEISGHTSGIKKALWCSEDKQILSADDKTVRLWDHATMTEVKSLNFNMSVSSMEYIPEGEILVITYGRSIAFHSAVSLDPIKSFEAPATINSASLHPEKEFVVAGGEDFKLYKYDYNSGEELESYKGHFGPIHCVRFSPDGELYASGSEDGTLRLWQTVVGKTYGLWKCVLPEEDSGELAKPKINFPETAEEELEEIASENSDSIYSSTPEVKA.

WD repeat units follow at residues 12 to 56 (GHTR…GTFL), 57 to 96 (GHKG…ELMT), 98 to 137 (AHKH…AEPK), 141 to 179 (GHTS…EVKS), 180 to 212 (LNFN…HSAV), 221 to 262 (EAPA…ESYK), and 263 to 302 (GHFG…TYGL). Phosphoserine is present on residues S312, S335, and S338. The segment at 327–350 (EEELEEIASENSDSIYSSTPEVKA) is disordered. The span at 337–350 (NSDSIYSSTPEVKA) shows a compositional bias: polar residues. Residue Y342 is modified to Phosphotyrosine.

It belongs to the WD repeat STRAP family. As to quaternary structure, part of the core SMN complex that contains SMN1, GEMIN2/SIP1, DDX20/GEMIN3, GEMIN4, GEMIN5, GEMIN6, GEMIN7, GEMIN8 and STRAP/UNRIP. Part of the SMN-Sm complex that contains SMN1, GEMIN2/SIP1, DDX20/GEMIN3, GEMIN4, GEMIN5, GEMIN6, GEMIN7, GEMIN8, STRAP/UNRIP and the Sm proteins SNRPB, SNRPD1, SNRPD2, SNRPD3, SNRPE, SNRPF and SNRPG. Interacts directly with GEMIN6 and GEMIN7. Associates with the SMN complex in the cytoplasm but not in the nucleus. Also interacts with CSDE1/UNR and MAWBP. Interacts with PDPK1. Interacts with TRIM48.

It localises to the cytoplasm. The protein localises to the nucleus. In terms of biological role, the SMN complex catalyzes the assembly of small nuclear ribonucleoproteins (snRNPs), the building blocks of the spliceosome, and thereby plays an important role in the splicing of cellular pre-mRNAs. Most spliceosomal snRNPs contain a common set of Sm proteins SNRPB, SNRPD1, SNRPD2, SNRPD3, SNRPE, SNRPF and SNRPG that assemble in a heptameric protein ring on the Sm site of the small nuclear RNA to form the core snRNP (Sm core). In the cytosol, the Sm proteins SNRPD1, SNRPD2, SNRPE, SNRPF and SNRPG are trapped in an inactive 6S pICln-Sm complex by the chaperone CLNS1A that controls the assembly of the core snRNP. To assemble core snRNPs, the SMN complex accepts the trapped 5Sm proteins from CLNS1A forming an intermediate. Binding of snRNA inside 5Sm triggers eviction of the SMN complex, thereby allowing binding of SNRPD3 and SNRPB to complete assembly of the core snRNP. STRAP plays a role in the cellular distribution of the SMN complex. Negatively regulates TGF-beta signaling but positively regulates the PDPK1 kinase activity by enhancing its autophosphorylation and by significantly reducing the association of PDPK1 with 14-3-3 protein. This chain is Serine-threonine kinase receptor-associated protein (STRAP), found in Bos taurus (Bovine).